The following is a 584-amino-acid chain: MIYIWICFYLQTTLLPCSLSTRTKFAICHNTSKLHRAAYKTSRWNIPGDVGSTPPPSKLHQALCLNEHSLSCMAELPMDYEGKIKETRHLLHLKGENDPIESLIFVDATLRLGVNHHFQKEIEEILRKSYATMKSPIICEYHTLHEVSLFFRLMRQHGRYVSADVFNNFKGESGRFKEELKRDTRGLVELYEAAQLSFEGERILDEAENFSRQILHGNLAGMEDNLRRSVGNKLRYPFHTSIARFTGRNYDDDLGGMYEWGKTLRELALMDLQVERSVYQEELLQVSKWWNELGLYKKLNLARNRPFEFYTWSMVILADYINLSEQRVELTKSVAFIYLIDDIFDVYGTLDELIIFTEAVNKWDYSATDTLPENMKMCCMTLLDTINGTSQKIYEKHGYNPIDSLKTTWKSLCSAFLVEAKWSASGSLPSANEYLENEKVSSGVYVVLVHLFCLMGLGGTSRGSIELNDTQELMSSIAIIFRLWNDLGSAKNEHQNGKDGSYLNCYKKEHINLTAAQAHEHALELVAIEWKRLNKESFNLNHDSVSSFKQAALNLARMVPLMYSYDHNQRGPVLEEYVKFMLSD.

The N-terminal 45 residues, 1–45 (MIYIWICFYLQTTLLPCSLSTRTKFAICHNTSKLHRAAYKTSRWN), are a transit peptide targeting the chloroplast. 3 N-linked (GlcNAc...) asparagine glycosylation sites follow: Asn-30, Asn-209, and Asn-322. Residues Asp-341 and Asp-345 each coordinate Mg(2+). The DDXXD motif signature appears at 341–345 (DDIFD). Asn-387 and Asn-468 each carry an N-linked (GlcNAc...) asparagine glycan. Positions 485, 489, and 493 each coordinate Mg(2+). An N-linked (GlcNAc...) asparagine glycan is attached at Asn-512.

It belongs to the terpene synthase family. Tpsg subfamily. It depends on Mg(2+) as a cofactor. The cofactor is Mn(2+). In terms of tissue distribution, accumulates at low levels in flowers; mostly expressed in both upper and lower petal lobes, and, to a lower extent, in tube and stamens.

It localises to the plastid. The protein resides in the chloroplast stroma. It carries out the reaction (2E)-geranyl diphosphate = tricyclene + diphosphate. The catalysed reaction is (2E)-geranyl diphosphate = beta-myrcene + diphosphate. It functions in the pathway secondary metabolite biosynthesis; terpenoid biosynthesis. Functionally, may contribute to floral scent emission. The chain is Tricyclene synthase 1e20, chloroplastic (1e20) from Antirrhinum majus (Garden snapdragon).